Here is an 87-residue protein sequence, read N- to C-terminus: HssA/B-like protein 28 (87 aa).

It belongs to the hssA/B family.

This chain is HssA/B-like protein 28 (hssl28), found in Dictyostelium discoideum (Social amoeba).